The chain runs to 122 residues: uncharacterized protein (122 aa).

An N-terminal signal peptide occupies residues 1 to 28; that stretch reads MVPGPPESVVRFFLWFCFLLPPTRKASC. Asparagine 49 carries an N-linked (GlcNAc...) asparagine glycan.

The protein localises to the secreted. This is an uncharacterized protein from Homo sapiens (Human).